The following is a 504-amino-acid chain: Putative F-box/FBD/LRR-repeat protein At3g59240 (504 aa).

Residues 7–60 (KDIISDLPEALICHLLSFVPTKEAALTSLLSEKWRYLFAFAPILDFDDSVWMQS) form the F-box domain. LRR repeat units follow at residues 69 to 95 (HRKFMDFVDRVLGLQGNSTLVRFSLNC), 145 to 171 (RIRTENCTIIDLEDVFLPKLKTLDLSS), 173 to 198 (WFRDGDTCLLKLISGCQVLEDLTMSD), 286 to 312 (TNLFMGISNVRILQLFSNALEVLTFCC), 329 to 354 (DKDVGWESLPALLKNCPNLETLVFKG), 369 to 396 (CLCKSSKDIRSCLSSSPVKVLKILKFGE), and 403 to 428 (DEEKQLELVKYFLETMPNLEQMILHY). Positions 382–427 (SSSPVKVLKILKFGEVASYFGDEEKQLELVKYFLETMPNLEQMILH) constitute an FBD domain.

In Arabidopsis thaliana (Mouse-ear cress), this protein is Putative F-box/FBD/LRR-repeat protein At3g59240.